We begin with the raw amino-acid sequence, 149 residues long: Pleckstrin homology domain-containing family J member 1 (149 aa).

Residues 15–108 (RAEKAAELSM…WVEALTNASY (94 aa)) form the PH domain.

The chain is Pleckstrin homology domain-containing family J member 1 (plekhj1) from Xenopus tropicalis (Western clawed frog).